A 270-amino-acid chain; its full sequence is Putative pyruvate, phosphate dikinase regulatory protein (270 aa).

Position 148–155 (148–155 (GISRTSKT)) interacts with ADP.

It belongs to the pyruvate, phosphate/water dikinase regulatory protein family. PDRP subfamily.

It carries out the reaction N(tele)-phospho-L-histidyl/L-threonyl-[pyruvate, phosphate dikinase] + ADP = N(tele)-phospho-L-histidyl/O-phospho-L-threonyl-[pyruvate, phosphate dikinase] + AMP + H(+). It catalyses the reaction N(tele)-phospho-L-histidyl/O-phospho-L-threonyl-[pyruvate, phosphate dikinase] + phosphate + H(+) = N(tele)-phospho-L-histidyl/L-threonyl-[pyruvate, phosphate dikinase] + diphosphate. In terms of biological role, bifunctional serine/threonine kinase and phosphorylase involved in the regulation of the pyruvate, phosphate dikinase (PPDK) by catalyzing its phosphorylation/dephosphorylation. In Bacillus cereus (strain 03BB102), this protein is Putative pyruvate, phosphate dikinase regulatory protein.